Reading from the N-terminus, the 244-residue chain is DNA repair protein RecO (244 aa).

This sequence belongs to the RecO family.

Involved in DNA repair and RecF pathway recombination. This is DNA repair protein RecO from Koribacter versatilis (strain Ellin345).